The sequence spans 245 residues: Adenosylcobinamide-GDP ribazoletransferase (245 aa).

Transmembrane regions (helical) follow at residues Phe31 to Ala51, Pro61 to Leu81, Val113 to Leu133, Ala138 to Thr158, and Leu192 to Leu212.

Belongs to the CobS family. Mg(2+) serves as cofactor.

The protein localises to the cell inner membrane. It catalyses the reaction alpha-ribazole + adenosylcob(III)inamide-GDP = adenosylcob(III)alamin + GMP + H(+). The enzyme catalyses alpha-ribazole 5'-phosphate + adenosylcob(III)inamide-GDP = adenosylcob(III)alamin 5'-phosphate + GMP + H(+). The protein operates within cofactor biosynthesis; adenosylcobalamin biosynthesis; adenosylcobalamin from cob(II)yrinate a,c-diamide: step 7/7. Joins adenosylcobinamide-GDP and alpha-ribazole to generate adenosylcobalamin (Ado-cobalamin). Also synthesizes adenosylcobalamin 5'-phosphate from adenosylcobinamide-GDP and alpha-ribazole 5'-phosphate. The chain is Adenosylcobinamide-GDP ribazoletransferase from Pseudomonas aeruginosa (strain UCBPP-PA14).